Reading from the N-terminus, the 306-residue chain is Immune protein Tsi7 (306 aa).

Interacts with Tse7.

Functionally, immunity protein that plays a role in preventing early activation of toxin Tse7. Protects thereby cells from Tse7 DNase activity. The chain is Immune protein Tsi7 from Pseudomonas aeruginosa (strain ATCC 15692 / DSM 22644 / CIP 104116 / JCM 14847 / LMG 12228 / 1C / PRS 101 / PAO1).